A 463-amino-acid polypeptide reads, in one-letter code: MNGSTSSDAVDPGLCVTTPSPVKQTLTLGSDTFNKDDKQITPSIRRSNSTRSKGINFNVAISPLATGQTPPSSKGGHRKTASYDAKNLHLPQLAESSPSSTIPDSPIPTASEELKYDLPLPSTEQLMGLDIDDQLRLLALKEMSIVEIKDSIGNLTSKLQRNENELHSLREVIQRSLYKELNSSSSKSKKETSSNGFVTRPQRQNSNPREEAIASTKNRSRRRTLSSSSSGVPPVLSSQQLSQNTDKQSRRDSTLWSNLSKPLNLIQQFDSMLQHEFEKSMIPQKNQEGSDKTMDSHKSRHSEDSTSSLGSISSPLNSKSKSVTGKQSNDELDRYFAQQSTSGASKDKPDGVVPTESHMNSDDMIQAVSSSIWSFVNDVKTNVLSSLADEDVPESRSHVTKGPSGFSNSNDQKEINDLTVYNLDTGSTVSLDKNEDSDLDYTFVHNTANEDRAAVDHDKSKND.

The segment at 1-110 (MNGSTSSDAV…TIPDSPIPTA (110 aa)) is disordered. 2 stretches are compositionally biased toward polar residues: residues 17-32 (TTPS…GSDT) and 40-55 (ITPS…SKGI). Residues 96–110 (SSPSSTIPDSPIPTA) show a composition bias toward low complexity. The stretch at 145–177 (IVEIKDSIGNLTSKLQRNENELHSLREVIQRSL) forms a coiled coil. 3 disordered regions span residues 180 to 255 (ELNS…DSTL), 281 to 358 (MIPQ…TESH), and 388 to 413 (ADED…NDQK). Over residues 225 to 238 (LSSSSSGVPPVLSS) the composition is skewed to low complexity. The segment covering 288–304 (EGSDKTMDSHKSRHSED) has biased composition (basic and acidic residues). Over residues 305–322 (STSSLGSISSPLNSKSKS) the composition is skewed to low complexity.

It belongs to the TDA11 family.

It is found in the cytoplasm. This is Topoisomerase I damage affected protein 11 (TDA11) from Debaryomyces hansenii (strain ATCC 36239 / CBS 767 / BCRC 21394 / JCM 1990 / NBRC 0083 / IGC 2968) (Yeast).